Reading from the N-terminus, the 521-residue chain is Tubulin-specific chaperone E (521 aa).

In terms of domain architecture, CAP-Gly spans 24–68 (GPVPPTAGVWLGVEWDHPERGKHDGSHDGVRYFTCRHPTGGSFVR). LRR repeat units lie at residues 147–168 (FVQS…AAIT), 173–194 (SLQE…SSLS), 199–220 (HLRV…HCAP), 224–245 (QVEE…EHVL), 247–268 (ALTV…EISH), 271–292 (RLER…DVPA), and 301–322 (ALKE…NELE). In terms of domain architecture, LRRCT spans 335 to 377 (NPLLHKEKNLETARQIMIARLGQLELLDMRQILSDERRGAELD).

Belongs to the TBCE family. Supercomplex made of cofactors A to E. Cofactors A and D function by capturing and stabilizing tubulin in a quasi-native conformation. Cofactor E binds to the cofactor D-tubulin complex; interaction with cofactor C then causes the release of tubulin polypeptides that are committed to the native state.

It is found in the cytoplasm. It localises to the cytoskeleton. Tubulin-folding protein; involved in the second step of the tubulin folding pathway. The sequence is that of Tubulin-specific chaperone E (tbce) from Danio rerio (Zebrafish).